Reading from the N-terminus, the 450-residue chain is UDP-N-acetylmuramoylalanine--D-glutamate ligase (450 aa).

119-125 (GSNGKTT) is a binding site for ATP.

Belongs to the MurCDEF family.

It localises to the cytoplasm. The enzyme catalyses UDP-N-acetyl-alpha-D-muramoyl-L-alanine + D-glutamate + ATP = UDP-N-acetyl-alpha-D-muramoyl-L-alanyl-D-glutamate + ADP + phosphate + H(+). The protein operates within cell wall biogenesis; peptidoglycan biosynthesis. Functionally, cell wall formation. Catalyzes the addition of glutamate to the nucleotide precursor UDP-N-acetylmuramoyl-L-alanine (UMA). This chain is UDP-N-acetylmuramoylalanine--D-glutamate ligase, found in Bacillus mycoides (strain KBAB4) (Bacillus weihenstephanensis).